A 275-amino-acid polypeptide reads, in one-letter code: Ribosomal RNA small subunit methyltransferase A (275 aa).

S-adenosyl-L-methionine contacts are provided by Asn-28, Leu-30, Gly-55, Glu-77, Asp-103, and Asn-123.

Belongs to the class I-like SAM-binding methyltransferase superfamily. rRNA adenine N(6)-methyltransferase family. RsmA subfamily.

It localises to the cytoplasm. The catalysed reaction is adenosine(1518)/adenosine(1519) in 16S rRNA + 4 S-adenosyl-L-methionine = N(6)-dimethyladenosine(1518)/N(6)-dimethyladenosine(1519) in 16S rRNA + 4 S-adenosyl-L-homocysteine + 4 H(+). Its function is as follows. Specifically dimethylates two adjacent adenosines (A1518 and A1519) in the loop of a conserved hairpin near the 3'-end of 16S rRNA in the 30S particle. May play a critical role in biogenesis of 30S subunits. The protein is Ribosomal RNA small subunit methyltransferase A of Allorhizobium ampelinum (strain ATCC BAA-846 / DSM 112012 / S4) (Agrobacterium vitis (strain S4)).